Reading from the N-terminus, the 294-residue chain is Putative S-adenosyl-L-methionine-dependent methyltransferase RHA1_ro00605 (294 aa).

Residues D120 and 149–150 (DL) each bind S-adenosyl-L-methionine.

This sequence belongs to the UPF0677 family.

Exhibits S-adenosyl-L-methionine-dependent methyltransferase activity. The chain is Putative S-adenosyl-L-methionine-dependent methyltransferase RHA1_ro00605 from Rhodococcus jostii (strain RHA1).